Here is a 921-residue protein sequence, read N- to C-terminus: MQRHKELYKEQSLVLSPRNHCQENRDRLQAARAKKREDCFYQNRIISVSPTPVKIKQLAAAQAALTQENVAPKLESPERLDTKPAELLKESNPKVSRQKLYLQRYMEWKIAKTKEHKQQDQKRRGAAINVPTVKQSKALPKSQTFRVPDNLASAKQKEAAPMFQPPKRCSLYMIANPTGKGKAAEPIKPSIPKPTSAAAPPSSNTVAASSALARHKSAASATKIVPAIRQNNNPVALARQKAAARPIPNTTKQTTSVRQPGIEAKKITTTIPRPTPATVTKAKTPGIRQQPPVVSTKPRLPEPPAPRTARLPNVLSKPFEKPLGNKAPVTRRANVVKPQPIRGGGGAAAKFKDTAGATSKAASHSIRMKATKIKSQYTRLQDNVRKLPQLKAELLHAATLDIPPLTPLDDIHNPFIDQATSTQCKSNNSSGHLLEAFGDTILLSPVAPVKAEGESSVKRQLLPEGKKEASGPVAKKKFDFTRYSVANSPAEDSLILDPQQTTVKEDTGDSTLVPEGTKTPPRRESNGMPNYLSPFVSVSRGKVNSRCEKEKRNSFYLSNEESPLEVRRAIESVLYFRLQLENEITRLQALCAEWEAYSKENEARLQETGGIDMINVTIGQTRLLTTKKMMQFSGLIDRCEAGATGKNSQPNDGSEDSKPVQAEDLEGWWDMLRLQSENVDKRFDNLKRWKANDWLDPDAVAEEPKQPKPKPKISRNMKIKSKAKPSSNLQQFLRKAHANMKKTKVEEPTLEDGLPATSSRHSSPRVIVVRNRRSFSPARTVLRMSTGEGRQSIAPNALLKSAILAAAEQNAAKTPPPKPRTSILKTPGTTKRQNRGVLFSAKKSVRRFQFTYEEGNISNDETVGADKLEDCEEDMSLEASTESGSLEQNPGRDSNQENEATPRTYTLRNRRVNLRPSSEFM.

Phosphoserine is present on Ser49. Thr51 is subject to Phosphothreonine. Residues Ser76 and Ser170 each carry the phosphoserine modification. Tyr172 is subject to Phosphotyrosine. 2 disordered regions span residues 179–208 and 273–325; these read GKGK…TVAA and RPTP…PLGN. 2 stretches are compositionally biased toward low complexity: residues 193–208 and 273–285; these read KPTS…TVAA and RPTP…AKTP. Position 444 is a phosphoserine (Ser444). The tract at residues 500–531 is disordered; it reads QTTVKEDTGDSTLVPEGTKTPPRRESNGMPNY. Thr519 is subject to Phosphothreonine. The residue at position 554 (Ser554) is a Phosphoserine. Disordered stretches follow at residues 641 to 660 and 743 to 763; these read AGAT…SKPV and TKVE…RHSS. Ser785 and Ser792 each carry phosphoserine. 2 disordered regions span residues 809 to 833 and 861 to 921; these read QNAA…TKRQ and ETVG…SEFM. Thr826 carries the post-translational modification Phosphothreonine. Residues 878 to 907 are compositionally biased toward polar residues; that stretch reads EASTESGSLEQNPGRDSNQENEATPRTYTL.

The protein belongs to the SAPAP family. In terms of tissue distribution, expressed in the central nervous system and at different stages of gametogenesis. In embryos, it is expressed in central nervous system and brain. In testis, it is strongly expressed in pre-meiotic germ cells, but is not found in somatic or post-meiotic cells.

It localises to the cell membrane. The protein localises to the nucleus. The protein resides in the nucleoplasm. It is found in the cytoplasm. Its subcellular location is the cytoskeleton. It localises to the spindle. Cell cycle regulator. The chain is Guanylate kinase-associated protein mars (mars) from Drosophila melanogaster (Fruit fly).